Consider the following 90-residue polypeptide: Sec-independent protein translocase protein TatAo (90 aa).

The helical transmembrane segment at 8 to 28 (FPGLPGGPELLIVLLIVVLLF) threads the bilayer. The interval 39-90 (SSGQAMGEFRRGREEIEEELKKGAEGGDDEGENGDEAEADDADATETEAESR) is disordered. Residues 46–63 (EFRRGREEIEEELKKGAE) are compositionally biased toward basic and acidic residues. Residues 64 to 90 (GGDDEGENGDEAEADDADATETEAESR) are compositionally biased toward acidic residues.

Belongs to the TatA/E family. Forms a complex with TatC. Cytoplasmic and membrane-bound TatA form high-molecular-weight complexes.

Its subcellular location is the cell membrane. It is found in the cytoplasm. In terms of biological role, part of the twin-arginine translocation (Tat) system that transports large folded proteins containing a characteristic twin-arginine motif in their signal peptide across membranes. TatA could form the protein-conducting channel of the Tat system. The polypeptide is Sec-independent protein translocase protein TatAo (Haloferax volcanii (strain ATCC 29605 / DSM 3757 / JCM 8879 / NBRC 14742 / NCIMB 2012 / VKM B-1768 / DS2) (Halobacterium volcanii)).